The following is a 182-amino-acid chain: CASP-like protein 2B1 (182 aa).

The Cytoplasmic portion of the chain corresponds to 1–12; that stretch reads MKLIDRRMRLTE. The helical transmembrane segment at 13-31 threads the bilayer; it reads LLLRCSISVFALLALILVV. At 32 to 52 the chain is on the extracellular side; sequence TDTEVKLIFTIKKTAKYTDMK. A helical transmembrane segment spans residues 53–73; the sequence is AVVFLVVANGIAAVYSLLQSV. Residues 74-89 are Cytoplasmic-facing; it reads RCVVGTMKGKVLFSKP. A helical membrane pass occupies residues 90-110; that stretch reads LAWAFFSGDQAMAYLNVAAIA. Residues 111–141 are Extracellular-facing; that stretch reads ATAESGVIAREGEEDLQWMRVCTMYGKFCNQ. The chain crosses the membrane as a helical span at residues 142–162; that stretch reads MAIGVSSALLASIAMVFVSCI. Topologically, residues 163-182 are cytoplasmic; sequence SAFSLFRLYGATKDRRTTPW.

It belongs to the Casparian strip membrane proteins (CASP) family. As to quaternary structure, homodimer and heterodimers.

It localises to the cell membrane. The protein is CASP-like protein 2B1 of Arabidopsis thaliana (Mouse-ear cress).